A 185-amino-acid chain; its full sequence is Elongation factor P (185 aa).

It belongs to the elongation factor P family.

The protein localises to the cytoplasm. It participates in protein biosynthesis; polypeptide chain elongation. In terms of biological role, involved in peptide bond synthesis. Stimulates efficient translation and peptide-bond synthesis on native or reconstituted 70S ribosomes in vitro. Probably functions indirectly by altering the affinity of the ribosome for aminoacyl-tRNA, thus increasing their reactivity as acceptors for peptidyl transferase. This Paraburkholderia xenovorans (strain LB400) protein is Elongation factor P.